The primary structure comprises 158 residues: CD-NTase/cGAS isopeptidase (158 aa).

E38 acts as the Proton donor/acceptor in catalysis. Zn(2+)-binding residues include H100, H102, and D113.

Belongs to the peptidase M67B family. Cap3 isopeptidase subfamily.

Metalloprotease priming reversal component of a CBASS antivirus system. CBASS (cyclic oligonucleotide-based antiphage signaling system) provides immunity against bacteriophages. The CD-NTase protein synthesizes cyclic nucleotides in response to infection; these serve as specific second messenger signals. The signals activate a diverse range of effectors, leading to bacterial cell death and thus abortive phage infection. A type II-A(GA) CBASS system. Functionally, reverses the primed state of CdnA, the CD-NTase. In terms of biological role, the capV-cdnA-cap2-cap3 operon provides about 10(4)-fold protection in strain BWHPSA011 against infection by phage PaMx41. In P.aeruginosa strain PAO1 it confers protection against phages PaMx41 and JBD18 but not JBD67 (JBD18 and JBD67 do not replicate in BWHPSA011 / Pa011). When acb2 in JBD67 is deleted this CBASS operon then protects against JDB67 also. This CBASS system limits prophage induction of lysogenized JBD67 as well as viral lytic replication. The chain is CD-NTase/cGAS isopeptidase from Pseudomonas aeruginosa (strain BWHPSA011 / Pa011).